Here is a 496-residue protein sequence, read N- to C-terminus: UDP-N-acetylmuramoylalanine--D-glutamate ligase (496 aa).

An ATP-binding site is contributed by 130–136 (GTNGKTT).

Belongs to the MurCDEF family. In terms of assembly, interacts with PknA. In terms of processing, phosphorylated by PknA.

It is found in the cytoplasm. It catalyses the reaction UDP-N-acetyl-alpha-D-muramoyl-L-alanine + D-glutamate + ATP = UDP-N-acetyl-alpha-D-muramoyl-L-alanyl-D-glutamate + ADP + phosphate + H(+). Its pathway is cell wall biogenesis; peptidoglycan biosynthesis. Cell wall formation. Catalyzes the addition of glutamate to the nucleotide precursor UDP-N-acetylmuramoyl-L-alanine (UMA). The chain is UDP-N-acetylmuramoylalanine--D-glutamate ligase from Mycobacterium tuberculosis (strain ATCC 25177 / H37Ra).